The sequence spans 1617 residues: ATP-binding cassette sub-family A member 6 (1617 aa).

The helical transmembrane segment at 31–51 threads the bilayer; the sequence is LLEWGLSILLGLCIALFSSSM. N-linked (GlcNAc...) asparagine glycosylation is found at Asn-84 and Asn-109. A run of 6 helical transmembrane segments spans residues 222-242, 268-288, 297-317, 327-347, 355-375, and 397-417; these read MFILFFLLHFSPLVYFISLNV, GLIYAGFIFIISIFVTIIITF, FMVIFILFFLYGLSLVALVFL, LTNLVVFLLTLFWGCLGFTVF, LEWILNICSPFAFTTGMIQII, and IATFSMLLLDGLIYLLLALYF. The ABC transporter 1 domain maps to 478 to 713; that stretch reads IRIRNVKKEY…WGLGYHLSLH (236 aa). 514–521 serves as a coordination point for ATP; the sequence is GHSGAGKS. Residues 854–874 form a helical membrane-spanning segment; the sequence is VLLTLLLVFGIAIFPLIVENI. Asn-940 carries an N-linked (GlcNAc...) asparagine glycan. 6 consecutive transmembrane segments (helical) span residues 1007–1027, 1062–1082, 1094–1114, 1127–1147, 1150–1170, and 1194–1214; these read IGLWTGLPDGSFFLFLVLCSI, ALVDVSFFILILLLMYLIFYI, IVFALVIVTPGYAASLVFFIY, SGLWSFYFFFASTIMFSITLI, FDLSILITTMVLVPSYTLLGF, and ATDFLVCFIPYFQTLLFVFVL. Residues 1288–1513 form the ABC transporter 2 domain; sequence GQKKSCFSKR…LGKDYILELK (226 aa). 1320–1327 serves as a coordination point for ATP; the sequence is GPNGAGKS.

Belongs to the ABC transporter superfamily. ABCA family. As to expression, widely expressed with higher expression in liver.

The protein localises to the golgi apparatus membrane. Probable transporter which may play a role in macrophage lipid transport and homeostasis. This Homo sapiens (Human) protein is ATP-binding cassette sub-family A member 6 (ABCA6).